The following is a 181-amino-acid chain: Inner membrane-spanning protein YciB (181 aa).

Helical transmembrane passes span 24–44 (SATA…WLRH), 49–69 (NMLW…LILQ), 81–101 (LYWL…KNLI), 119–139 (LNIS…YVAY), and 149–169 (FKLF…ALLL).

Belongs to the YciB family.

The protein resides in the cell inner membrane. Functionally, plays a role in cell envelope biogenesis, maintenance of cell envelope integrity and membrane homeostasis. The protein is Inner membrane-spanning protein YciB of Nitrosomonas eutropha (strain DSM 101675 / C91 / Nm57).